We begin with the raw amino-acid sequence, 237 residues long: tRNA (guanine-N(1)-)-methyltransferase (237 aa).

Residues Gly-113 and 133–138 each bind S-adenosyl-L-methionine; that span reads VGDFIV.

The protein belongs to the RNA methyltransferase TrmD family. In terms of assembly, homodimer.

It localises to the cytoplasm. It catalyses the reaction guanosine(37) in tRNA + S-adenosyl-L-methionine = N(1)-methylguanosine(37) in tRNA + S-adenosyl-L-homocysteine + H(+). In terms of biological role, specifically methylates guanosine-37 in various tRNAs. This chain is tRNA (guanine-N(1)-)-methyltransferase, found in Hydrogenovibrio crunogenus (strain DSM 25203 / XCL-2) (Thiomicrospira crunogena).